Reading from the N-terminus, the 103-residue chain is Acylphosphatase-2 (103 aa).

N-acetylserine is present on Ser2. The Acylphosphatase-like domain maps to 13–103 (SVDYEVFGRV…LDFSGFSTRY (91 aa)). Cys26 carries the post-translational modification S-glutathionyl cysteine; alternate. Catalysis depends on residues Arg28 and Asn46.

It belongs to the acylphosphatase family. As to quaternary structure, monomer (TU1) or homodimer (TU3) in absence of reducing factors; disulfide linked.

It catalyses the reaction an acyl phosphate + H2O = a carboxylate + phosphate + H(+). Its physiological role is not yet clear. In Meleagris gallopavo (Wild turkey), this protein is Acylphosphatase-2 (ACYP2).